The primary structure comprises 162 residues: NADH-quinone oxidoreductase subunit C (162 aa).

This sequence belongs to the complex I 30 kDa subunit family. NDH-1 is composed of 14 different subunits. Subunits NuoB, C, D, E, F, and G constitute the peripheral sector of the complex.

It is found in the cell inner membrane. It catalyses the reaction a quinone + NADH + 5 H(+)(in) = a quinol + NAD(+) + 4 H(+)(out). Functionally, NDH-1 shuttles electrons from NADH, via FMN and iron-sulfur (Fe-S) centers, to quinones in the respiratory chain. The immediate electron acceptor for the enzyme in this species is believed to be ubiquinone. Couples the redox reaction to proton translocation (for every two electrons transferred, four hydrogen ions are translocated across the cytoplasmic membrane), and thus conserves the redox energy in a proton gradient. This chain is NADH-quinone oxidoreductase subunit C, found in Trichlorobacter lovleyi (strain ATCC BAA-1151 / DSM 17278 / SZ) (Geobacter lovleyi).